We begin with the raw amino-acid sequence, 659 residues long: Biosynthetic arginine decarboxylase (659 aa).

Lys-128 is modified (N6-(pyridoxal phosphate)lysine). Position 308 to 318 (308 to 318 (FDVGGGLGVDY)) interacts with substrate.

Belongs to the Orn/Lys/Arg decarboxylase class-II family. SpeA subfamily. Requires Mg(2+) as cofactor. The cofactor is pyridoxal 5'-phosphate.

It carries out the reaction L-arginine + H(+) = agmatine + CO2. Its pathway is amine and polyamine biosynthesis; agmatine biosynthesis; agmatine from L-arginine: step 1/1. Its function is as follows. Catalyzes the biosynthesis of agmatine from arginine. The sequence is that of Biosynthetic arginine decarboxylase from Yersinia pestis.